The following is a 496-amino-acid chain: E3 ubiquitin-protein ligase Hakai (496 aa).

The tract at residues 35–60 (PNKIKPAPRPQRNMNRIPTKPQPGFD) is disordered. The RING-type; degenerate zinc finger occupies 104 to 144 (CDKCGLPIKIYGRMIPCKHVFCYDCALMHEKKADKLCPGTL). An HYB domain region spans residues 157-215 (CNDPVQRIEQCARGSLFMCSIVQGCKRTYLSQRDLQAHINHRHMRASKPTARPQPEPIH). The C2H2-type zinc-finger motif lies at 173-199 (FMCSIVQGCKRTYLSQRDLQAHINHRH). The span at 304 to 314 (VPIQDDSNSGA) shows a compositional bias: polar residues. A disordered region spans residues 304 to 496 (VPIQDDSNSG…DQARYRPYYQ (193 aa)). Composition is skewed to pro residues over residues 350–360 (APPPPPPPPIS), 380–397 (GPPPPMTTAPPPITPPPG), and 407–430 (MNHPPPGPPPQHGGPPVNAPPPHH). Residues 434–449 (SSMPQFNEDQGTLSPP) show a composition bias toward polar residues. Residues 464 to 483 (PRGPPPRMQGPPSQAPMPGP) are compositionally biased toward pro residues.

Belongs to the Hakai family. In terms of assembly, homodimer. Interacts with tyrosine-phosphorylated SRC substrates. Component of the WMM complex, a N6-methyltransferase complex composed of a catalytic subcomplex, named MAC, and of an associated subcomplex, named MACOM. Component of the MACOM subcomplex.

Its subcellular location is the nucleus speckle. It localises to the nucleus. The protein localises to the nucleoplasm. The catalysed reaction is S-ubiquitinyl-[E2 ubiquitin-conjugating enzyme]-L-cysteine + [acceptor protein]-L-lysine = [E2 ubiquitin-conjugating enzyme]-L-cysteine + N(6)-ubiquitinyl-[acceptor protein]-L-lysine.. The protein operates within protein modification; protein ubiquitination. In terms of biological role, E3 ubiquitin-protein ligase that mediates ubiquitination of several tyrosine-phosphorylated Src substrates. Associated component of the WMM complex, a complex that mediates N6-methyladenosine (m6A) methylation of RNAs, a modification that plays a role in the efficiency of mRNA splicing and RNA processing. In Xenopus laevis (African clawed frog), this protein is E3 ubiquitin-protein ligase Hakai.